The sequence spans 643 residues: Replication protein E1 (643 aa).

Positions 86 to 88 match the Nuclear localization signal motif; the sequence is KRK. The Nuclear export signal signature appears at 109 to 118; sequence LSPRLQEISL. Residue Ser-110 is modified to Phosphoserine; by host. Polar residues predominate over residues 152–175; it reads NTNAENGGSVHSTQSSGGDSSDNA. Positions 152-178 are disordered; sequence NTNAENGGSVHSTQSSGGDSSDNAENV. The DNA-binding region stretch occupies residues 179–345; the sequence is DPHCSITELK…LTIIQHGIDD (167 aa). The region spanning 444–594 is the SF3 helicase domain; it reads VEFISFLRAL…FPFDKNGNPV (151 aa). 470–477 contacts ATP; that stretch reads GPANTGKS. A Glycyl lysine isopeptide (Lys-Gly) (interchain with G-Cter in SUMO) cross-link involves residue Lys-551.

It belongs to the papillomaviridae E1 protein family. As to quaternary structure, can form hexamers. Interacts with E2 protein; this interaction increases E1 DNA binding specificity. Interacts with host DNA polymerase subunit POLA2. Interacts with host single stranded DNA-binding protein RPA1. Interacts with host TOP1; this interaction stimulates the enzymatic activity of TOP1. Post-translationally, phosphorylated. In terms of processing, sumoylated.

It localises to the host nucleus. The catalysed reaction is Couples ATP hydrolysis with the unwinding of duplex DNA by translocating in the 3'-5' direction.. The enzyme catalyses ATP + H2O = ADP + phosphate + H(+). Its function is as follows. ATP-dependent DNA 3'-5' helicase required for initiation of viral DNA replication. It forms a complex with the viral E2 protein. The E1-E2 complex binds to the replication origin which contains binding sites for both proteins. During the initial step, a dimer of E1 interacts with a dimer of protein E2 leading to a complex that binds the viral origin of replication with high specificity. Then, a second dimer of E1 displaces the E2 dimer in an ATP-dependent manner to form the E1 tetramer. Following this, two E1 monomers are added to each half of the site, which results in the formation of two E1 trimers on the viral ori. Subsequently, two hexamers will be created. The double hexamer acts as a bi-directional helicase machinery and unwinds the viral DNA and then recruits the host DNA polymerase to start replication. The sequence is that of Replication protein E1 from Human papillomavirus 45.